The following is a 369-amino-acid chain: Alanine racemase (369 aa).

The Proton acceptor; specific for D-alanine role is filled by lysine 35. Position 35 is an N6-(pyridoxal phosphate)lysine (lysine 35). Substrate is bound at residue arginine 130. Residue tyrosine 257 is the Proton acceptor; specific for L-alanine of the active site. Methionine 305 provides a ligand contact to substrate.

Belongs to the alanine racemase family. Pyridoxal 5'-phosphate is required as a cofactor.

The catalysed reaction is L-alanine = D-alanine. It participates in amino-acid biosynthesis; D-alanine biosynthesis; D-alanine from L-alanine: step 1/1. Catalyzes the interconversion of L-alanine and D-alanine. May also act on other amino acids. This chain is Alanine racemase (alr), found in Paracidovorax citrulli (strain AAC00-1) (Acidovorax citrulli).